The chain runs to 658 residues: Trimethylamine N-oxide transport system permease protein TmoV (658 aa).

Helical transmembrane passes span 20-40 (LGLA…AGLL), 103-123 (IGPI…YYLG), 127-147 (MALL…WDIA), 153-173 (VLVV…ISAW), 185-205 (VLAV…VIFF), 212-232 (GAVA…TLGL), 273-293 (VIML…PGLG), 300-320 (MGSF…LLAV), 349-369 (FLLM…VVPI), 420-440 (FMLS…ALLV), 447-467 (VLAA…RSVI), 469-489 (LYSV…IGVV), 517-537 (IPAI…ILIF), 585-605 (AVGF…AAFI), and 627-647 (FVLG…IMKW). The ABC transmembrane type-1 1 domain occupies 147–326 (AMQTMSVLVV…LLAVTLDRMS (180 aa)). One can recognise an ABC transmembrane type-1 2 domain in the interval 465 to 644 (SVITLYSVLA…LMALTFDMVI (180 aa)).

This sequence belongs to the binding-protein-dependent transport system permease family. In terms of assembly, the complex is probably composed of two ATP-binding proteins (TmoW), two transmembrane proteins (TmoV) and a solute-binding protein (TmoX).

Its subcellular location is the cell inner membrane. In terms of biological role, part of the ABC transporter complex TmoXWV involved in trimethylamine N-oxide (TMAO) import. Responsible for the translocation of the substrate across the membrane. Is specific for TMAO and essential for TMAO metabolism. The protein is Trimethylamine N-oxide transport system permease protein TmoV of Ruegeria pomeroyi (strain ATCC 700808 / DSM 15171 / DSS-3) (Silicibacter pomeroyi).